A 557-amino-acid chain; its full sequence is MYALALFASLLATALTSPVQDPKTCSGGSAVLCRDVKTAVDCGAVKHCQQMVWSKPTAKSLPCDICKTVVTEAGNLLKDNATQEEILHYLEKTCEWIHDSSLSASCKEVVDSYLPVILDMIKGEMSNPGEVCSALNLCQSLQEYLAEQNQKQLESNKIPEVDMARVVAPFMSNIPLLLYPQDHPRSQPQPKANEDVCQDCMKLVSDVQTAVKTNSSFIQGFVDHVKEDCDRLGPGVSDICKNYVDQYSEVCVQMLMHMQDQQPKEICVLAGFCNEVKRVPMKTLVPATETIKNILPALEMMDPYEQNLVQAHNVILCQTCQFVMNKFSELIVNNATEELLVKGLSNACALLPDPARTKCQEVVGTFGPSLLDIFIHEVNPSSLCGVIGLCAARPELVEALEQPAPAIVSALLKEPTPPKQPAQPKQSALPAHVPPQKNGGFCEVCKKLVLYLEHNLEKNSTKEEILAALEKGCSFLPDPYQKQCDDFVAEYEPLLLEILVEVMDPGFVCSKIGVCPSAYKLLLGTEKCVWGPSYWCQNMETAARCNAVDHCKRHVWN.

Positions 1–16 (MYALALFASLLATALT) are cleaved as a signal peptide. Positions 17 to 59 (SPVQDPKTCSGGSAVLCRDVKTAVDCGAVKHCQQMVWSKPTAK) are excised as a propeptide. Residues 18-58 (PVQDPKTCSGGSAVLCRDVKTAVDCGAVKHCQQMVWSKPTA) form the Saposin A-type 1 domain. Saposin B-type domains are found at residues 59–142 (KSLP…QSLQ), 193–277 (NEDV…NEVK), 313–394 (NVIL…AARP), and 438–519 (NGGF…PSAY). Intrachain disulfides connect Cys-63–Cys-138, Cys-66–Cys-132, and Cys-94–Cys-106. Asn-80 carries an N-linked (GlcNAc...) asparagine glycan. Residues 143-193 (EYLAEQNQKQLESNKIPEVDMARVVAPFMSNIPLLLYPQDHPRSQPQPKAN) constitute a propeptide that is removed on maturation. Cystine bridges form between Cys-197–Cys-273, Cys-200–Cys-267, and Cys-229–Cys-240. N-linked (GlcNAc...) asparagine glycosylation is present at Asn-214. Positions 277 to 312 (KRVPMKTLVPATETIKNILPALEMMDPYEQNLVQAH) are excised as a propeptide. 3 cysteine pairs are disulfide-bonded: Cys-317–Cys-390, Cys-320–Cys-384, and Cys-348–Cys-359. N-linked (GlcNAc...) asparagine glycosylation occurs at Asn-334. A propeptide spanning residues 393-437 (RPELVEALEQPAPAIVSALLKEPTPPKQPAQPKQSALPAHVPPQK) is cleaved from the precursor. Disulfide bonds link Cys-442-Cys-515, Cys-445-Cys-509, and Cys-473-Cys-484. N-linked (GlcNAc...) asparagine glycosylation occurs at Asn-459. Positions 520–557 (KLLLGTEKCVWGPSYWCQNMETAARCNAVDHCKRHVWN) are excised as a propeptide. Residues 521–557 (LLLGTEKCVWGPSYWCQNMETAARCNAVDHCKRHVWN) enclose the Saposin A-type 2 domain.

As to quaternary structure, saposin-B is a homodimer. Prosaposin exists as a roughly half-half mixture of monomers and disulfide-linked dimers. Monomeric prosaposin interacts (via C-terminus) with sortilin/SORT1, the interaction is required for targeting to lysosomes. Interacts with GRN; facilitates lysosomal delivery of progranulin from the extracellular space and the biosynthetic pathway.

It is found in the secreted. It localises to the lysosome. In terms of biological role, behaves as a myelinotrophic and neurotrophic factor, these effects are mediated by its G-protein-coupled receptors, GPR37 and GPR37L1, undergoing ligand-mediated internalization followed by ERK phosphorylation signaling. Its function is as follows. Saposin-A and saposin-C stimulate the hydrolysis of glucosylceramide by beta-glucosylceramidase (EC 3.2.1.45) and galactosylceramide by beta-galactosylceramidase (EC 3.2.1.46). Saposin-C apparently acts by combining with the enzyme and acidic lipid to form an activated complex, rather than by solubilizing the substrate. Functionally, saposin-B stimulates the hydrolysis of galacto-cerebroside sulfate by arylsulfatase A (EC 3.1.6.8), GM1 gangliosides by beta-galactosidase (EC 3.2.1.23) and globotriaosylceramide by alpha-galactosidase A (EC 3.2.1.22). Saposin-B forms a solubilizing complex with the substrates of the sphingolipid hydrolases. Saposin-D is a specific sphingomyelin phosphodiesterase activator (EC 3.1.4.12). In terms of biological role, saposins are specific low-molecular mass non-enzymatic proteins, they participate in the lysosomal degradation of sphingolipids, which takes place by the sequential action of specific hydrolases. The chain is Prosaposin (Psap) from Mus musculus (Mouse).